The following is a 722-amino-acid chain: A-type ATP synthase subunit I (722 aa).

The segment covering 309–321 (DYKPTGHDQHVPA) has biased composition (basic and acidic residues). Residues 309–352 (DYKPTGHDQHVPADDGADAATDGGTTASFDETDSPPVIQDNPGP) are disordered. A compositionally biased stretch (low complexity) spans 326–335 (DAATDGGTTA). 8 consecutive transmembrane segments (helical) span residues 384-404 (FYGF…LGFW), 419-439 (GVAM…GEVF), 474-494 (LAAS…FGFV), 505-525 (AALE…WLFS), 554-574 (LAAA…AGFL), 590-610 (IAAV…LVFG), 639-659 (FMLF…MHMG), and 662-682 (GILI…ALGV).

Belongs to the V-ATPase 116 kDa subunit family. In terms of assembly, has multiple subunits with at least A(3), B(3), C, D, E, F, H, I and proteolipid K(x).

It is found in the cell membrane. Functionally, component of the A-type ATP synthase that produces ATP from ADP in the presence of a proton gradient across the membrane. This chain is A-type ATP synthase subunit I, found in Halobacterium salinarum (strain ATCC 700922 / JCM 11081 / NRC-1) (Halobacterium halobium).